Reading from the N-terminus, the 73-residue chain is UPF0346 protein BLi02292/BL01432 (73 aa).

The protein belongs to the UPF0346 family.

In Bacillus licheniformis (strain ATCC 14580 / DSM 13 / JCM 2505 / CCUG 7422 / NBRC 12200 / NCIMB 9375 / NCTC 10341 / NRRL NRS-1264 / Gibson 46), this protein is UPF0346 protein BLi02292/BL01432.